Here is a 212-residue protein sequence, read N- to C-terminus: MQGYFITFEGPDGAGKTTVINEVVKAIQGQCKREILVTREPGGSKIAEKIRDIILDPANTEMNAKTEALLYAASRSQHVSEIINPALKRGDLVMSDRFVDSSLAYQGQGRGLGIDEVAQINAFATGHLEPDLTIFLDLDPAQGLARIAKVRSGSEDRLEQEKLAFHEEVYRGYQKVNQAHPDRVKVVDASQDLPQVVAASVKLVKSTFPELF.

Gly-10–Thr-17 contacts ATP.

This sequence belongs to the thymidylate kinase family.

The catalysed reaction is dTMP + ATP = dTDP + ADP. Phosphorylation of dTMP to form dTDP in both de novo and salvage pathways of dTTP synthesis. This Lactobacillus delbrueckii subsp. bulgaricus (strain ATCC 11842 / DSM 20081 / BCRC 10696 / JCM 1002 / NBRC 13953 / NCIMB 11778 / NCTC 12712 / WDCM 00102 / Lb 14) protein is Thymidylate kinase.